The chain runs to 188 residues: Elongation factor P-like protein (188 aa).

It belongs to the elongation factor P family.

This is Elongation factor P-like protein from Xylella fastidiosa (strain M23).